The primary structure comprises 208 residues: ATP phosphoribosyltransferase (208 aa).

The protein belongs to the ATP phosphoribosyltransferase family. Short subfamily. As to quaternary structure, heteromultimer composed of HisG and HisZ subunits.

The protein resides in the cytoplasm. The catalysed reaction is 1-(5-phospho-beta-D-ribosyl)-ATP + diphosphate = 5-phospho-alpha-D-ribose 1-diphosphate + ATP. It participates in amino-acid biosynthesis; L-histidine biosynthesis; L-histidine from 5-phospho-alpha-D-ribose 1-diphosphate: step 1/9. In terms of biological role, catalyzes the condensation of ATP and 5-phosphoribose 1-diphosphate to form N'-(5'-phosphoribosyl)-ATP (PR-ATP). Has a crucial role in the pathway because the rate of histidine biosynthesis seems to be controlled primarily by regulation of HisG enzymatic activity. This Oceanobacillus iheyensis (strain DSM 14371 / CIP 107618 / JCM 11309 / KCTC 3954 / HTE831) protein is ATP phosphoribosyltransferase.